The chain runs to 102 residues: DET1- and DDB1-associated protein 1 (102 aa).

An N-acetylalanine modification is found at Ala-2. Ser-33 is subject to Phosphoserine. Composition is skewed to basic and acidic residues over residues 66–75 (KNAAKKRDQE) and 91–102 (ARTDSPDMHEDT). The segment at 66 to 102 (KNAAKKRDQEQVELEGESSAPPRKVARTDSPDMHEDT) is disordered. Position 95 is a phosphoserine (Ser-95).

It belongs to the DDA1 family. Component of numerous DCX (DDB1-CUL4-X-box) E3 ubiquitin-protein ligase complexes which consist of a core of DDB1, cullin-4 (CUL4A or CUL4B), DDA1 and RBX1. Component of the DCX(DCAF15) complex, also named CLR4(DCAF15) complex, composed of DCAF15, DDB1, cullin-4 (CUL4A or CUL4B), DDA1 and RBX1. Part of the DDD core complex containing DET1, DDA1 and DDB1; the DDD core complex recruits a specific UBE2E enzyme, such as UBE2E1, UBE2E2 UBE2E3, to form specific DDD-E2 complexes.

The protein operates within protein modification; protein ubiquitination. Its function is as follows. Functions as a component of numerous distinct DCX (DDB1-CUL4-X-box) E3 ubiquitin-protein ligase complexes which mediate the ubiquitination and subsequent proteasomal degradation of target proteins. In the DCX complexes, acts as a scaffolding subunit required to stabilize the complex. This Bos taurus (Bovine) protein is DET1- and DDB1-associated protein 1.